We begin with the raw amino-acid sequence, 196 residues long: Probable thymidylate kinase (196 aa).

8–15 (GIDASGKT) contacts ATP.

This sequence belongs to the thymidylate kinase family.

It carries out the reaction dTMP + ATP = dTDP + ADP. The polypeptide is Probable thymidylate kinase (Metallosphaera sedula (strain ATCC 51363 / DSM 5348 / JCM 9185 / NBRC 15509 / TH2)).